A 120-amino-acid chain; its full sequence is Immunoglobulin lambda variable 4-60 (120 aa).

Residues 1–21 form the signal peptide; sequence MAWTPLLLLFPLLLHCTGSLS. The segment at 22 to 46 is framework-1; sequence QPVLTQSSSASASLGSSVKLTCTLS. The Ig-like domain occupies 23 to 120; the sequence is PVLTQSSSAS…YYCETWDSNT (98 aa). C43 and C113 are joined by a disulfide. The complementarity-determining-1 stretch occupies residues 47–53; sequence SGHSSYI. The framework-2 stretch occupies residues 54 to 70; the sequence is IAWHQQQPGKAPRYLMK. The complementarity-determining-2 stretch occupies residues 71–77; it reads LEGSGSY. The framework-3 stretch occupies residues 78-113; that stretch reads NKGSGVPDRFSGSSSGADRYLTISNLQFEDEADYYC. The interval 114–120 is complementarity-determining-3; it reads ETWDSNT.

In terms of assembly, immunoglobulins are composed of two identical heavy chains and two identical light chains; disulfide-linked.

It is found in the secreted. Its subcellular location is the cell membrane. V region of the variable domain of immunoglobulin light chains that participates in the antigen recognition. Immunoglobulins, also known as antibodies, are membrane-bound or secreted glycoproteins produced by B lymphocytes. In the recognition phase of humoral immunity, the membrane-bound immunoglobulins serve as receptors which, upon binding of a specific antigen, trigger the clonal expansion and differentiation of B lymphocytes into immunoglobulins-secreting plasma cells. Secreted immunoglobulins mediate the effector phase of humoral immunity, which results in the elimination of bound antigens. The antigen binding site is formed by the variable domain of one heavy chain, together with that of its associated light chain. Thus, each immunoglobulin has two antigen binding sites with remarkable affinity for a particular antigen. The variable domains are assembled by a process called V-(D)-J rearrangement and can then be subjected to somatic hypermutations which, after exposure to antigen and selection, allow affinity maturation for a particular antigen. The protein is Immunoglobulin lambda variable 4-60 of Homo sapiens (Human).